Here is a 372-residue protein sequence, read N- to C-terminus: Tetraacyldisaccharide 4'-kinase (372 aa).

Residue T60–T67 participates in ATP binding.

It belongs to the LpxK family.

The enzyme catalyses a lipid A disaccharide + ATP = a lipid IVA + ADP + H(+). It participates in glycolipid biosynthesis; lipid IV(A) biosynthesis; lipid IV(A) from (3R)-3-hydroxytetradecanoyl-[acyl-carrier-protein] and UDP-N-acetyl-alpha-D-glucosamine: step 6/6. Its function is as follows. Transfers the gamma-phosphate of ATP to the 4'-position of a tetraacyldisaccharide 1-phosphate intermediate (termed DS-1-P) to form tetraacyldisaccharide 1,4'-bis-phosphate (lipid IVA). This Psychrobacter cryohalolentis (strain ATCC BAA-1226 / DSM 17306 / VKM B-2378 / K5) protein is Tetraacyldisaccharide 4'-kinase.